A 446-amino-acid chain; its full sequence is D-inositol 3-phosphate glycosyltransferase (446 aa).

His19 contributes to the 1D-myo-inositol 3-phosphate binding site. UDP-N-acetyl-alpha-D-glucosamine-binding positions include 25 to 26 (QP) and Gly33. 1D-myo-inositol 3-phosphate is bound by residues 30–35 (DAGGMN), Lys88, Tyr121, Thr145, and Arg165. The UDP-N-acetyl-alpha-D-glucosamine site is built by Arg239, Lys244, and Gln303. 3 residues coordinate Mg(2+): Tyr312, Arg313, and Ser315. UDP-N-acetyl-alpha-D-glucosamine contacts are provided by Glu325 and Glu333. Residue Thr339 coordinates Mg(2+).

This sequence belongs to the glycosyltransferase group 1 family. MshA subfamily. In terms of assembly, homodimer.

It carries out the reaction 1D-myo-inositol 3-phosphate + UDP-N-acetyl-alpha-D-glucosamine = 1D-myo-inositol 2-acetamido-2-deoxy-alpha-D-glucopyranoside 3-phosphate + UDP + H(+). Its function is as follows. Catalyzes the transfer of a N-acetyl-glucosamine moiety to 1D-myo-inositol 3-phosphate to produce 1D-myo-inositol 2-acetamido-2-deoxy-glucopyranoside 3-phosphate in the mycothiol biosynthesis pathway. The chain is D-inositol 3-phosphate glycosyltransferase from Rhodococcus opacus (strain B4).